A 358-amino-acid chain; its full sequence is Alanine racemase (358 aa).

Lys34 (proton acceptor; specific for D-alanine) is an active-site residue. Lys34 carries the N6-(pyridoxal phosphate)lysine modification. Arg130 serves as a coordination point for substrate. Tyr254 (proton acceptor; specific for L-alanine) is an active-site residue. Met302 is a substrate binding site.

The protein belongs to the alanine racemase family. It depends on pyridoxal 5'-phosphate as a cofactor.

It catalyses the reaction L-alanine = D-alanine. It participates in amino-acid biosynthesis; D-alanine biosynthesis; D-alanine from L-alanine: step 1/1. Functionally, catalyzes the interconversion of L-alanine and D-alanine. May also act on other amino acids. This Actinobacillus succinogenes (strain ATCC 55618 / DSM 22257 / CCUG 43843 / 130Z) protein is Alanine racemase (alr).